Here is an 830-residue protein sequence, read N- to C-terminus: MPSQSRSRDRYRGRDTEYTRRRYPDEHDYSHDDHDYDYDDDDDDNDDLEQDVTERRYRRDGYRRPRGESRARAYYERDAAAAAAHDEELLAEERERRRAGASGSPRKSGQHRERDRDRERDREAQSRRRTYEDDGRHRTRDGRRERRREGGGEGGRRERRRGESRRGEAARKHQSSDSTNSASHLLSADALARLGSQYEKEDRRERAHAKDAAKAERKRRKKRAVVGEQERGLRAEKPRDRSRARVASGAYMEEGRGPEMEFRRRGGGGPPMDARWPKGGGWGGSVDGGDAGRPFWKQKKWLIGIGVVILILVIVIPVAVVVSKKHNDKPNATTTQPDGTTPSNSNLDGLSPDSIPGYAKGTFLDPWTWYDTNDFNVTFTNETVGGLSLMGLNSTWDDSARPNDNVPPLNKPFPYGKQPIRGVNLGGWLSLEPFITPSFFQSYSALSGVIDEYTLTQKLGSTAGARLEKHYATFITEQDFADIRDAGLDHVRIQYSYWAVTTYDGDPYVAKTSWRYLLRAIEYCRKYGLRVKLDPHGIPGSQNGWNHSGRQGAIGWLNGTDGELNRKRSLEVHDQVSKFFAQDRYKNVVTIYGLVNEPLMLSLSVEDVLNWTVEATKLVQKNGITAYIALHDGFLNLSKWKSILKTRPDNMLLDTHQYTIFNTGQIVLNHTARVNLICNDWSAMIKEVNSTSGFGPTICGEWSQADTDCAQYLNNVGRGTRWEGTFSLTDSTQYCPTADSGPRCSCANANADPSAYSADYKKFLQTYAEAQMSAFETGQGWFYWTWRTESAAQWSYRTAWKGGFMPQKAYSPSFKCGDTVPDFGSLPEYY.

Basic and acidic residues predominate over residues 1 to 34 (MPSQSRSRDRYRGRDTEYTRRRYPDEHDYSHDDH). The disordered stretch occupies residues 1-279 (MPSQSRSRDR…PPMDARWPKG (279 aa)). Residues 1–301 (MPSQSRSRDR…GRPFWKQKKW (301 aa)) lie on the Cytoplasmic side of the membrane. Residues 35–51 (DYDYDDDDDDNDDLEQD) are compositionally biased toward acidic residues. Composition is skewed to basic and acidic residues over residues 52–98 (VTER…ERRR) and 110–175 (QHRE…KHQS). Positions 181–194 (SASHLLSADALARL) are enriched in low complexity. Basic and acidic residues-rich tracts occupy residues 198–215 (YEKE…AAKA), 228–243 (EQER…DRSR), and 253–264 (EEGRGPEMEFRR). Residues 302-322 (LIGIGVVILILVIVIPVAVVV) traverse the membrane as a helical; Signal-anchor for type II membrane protein segment. Over 323 to 830 (SKKHNDKPNA…PDFGSLPEYY (508 aa)) the chain is Extracellular. The segment at 327–351 (NDKPNATTTQPDGTTPSNSNLDGLS) is disordered. Residues 330 to 348 (PNATTTQPDGTTPSNSNLD) are compositionally biased toward polar residues. Residues N331, N376, N381, N393, N546, and N558 are each glycosylated (N-linked (GlcNAc...) asparagine). The active-site Proton donor is the E597. Residues N610, N636, N669, and N689 are each glycosylated (N-linked (GlcNAc...) asparagine). Catalysis depends on E701, which acts as the Nucleophile.

Belongs to the glycosyl hydrolase 5 (cellulase A) family.

Its subcellular location is the cell membrane. It catalyses the reaction Successive hydrolysis of beta-D-glucose units from the non-reducing ends of (1-&gt;3)-beta-D-glucans, releasing alpha-glucose.. Functionally, glucosidase involved in the degradation of cellulosic biomass. Active on lichenan. The chain is Probable glucan 1,3-beta-glucosidase D (exgD) from Aspergillus clavatus (strain ATCC 1007 / CBS 513.65 / DSM 816 / NCTC 3887 / NRRL 1 / QM 1276 / 107).